Here is a 408-residue protein sequence, read N- to C-terminus: LL-diaminopimelate aminotransferase (408 aa).

Y15 and G42 together coordinate substrate. Pyridoxal 5'-phosphate is bound by residues Y72, 108-109 (SK), Y132, N187, Y218, and 246-248 (SFS). 3 residues coordinate substrate: K109, Y132, and N187. Position 249 is an N6-(pyridoxal phosphate)lysine (K249). The pyridoxal 5'-phosphate site is built by R257 and N292. The substrate site is built by N292 and R388.

Belongs to the class-I pyridoxal-phosphate-dependent aminotransferase family. LL-diaminopimelate aminotransferase subfamily. As to quaternary structure, homodimer. It depends on pyridoxal 5'-phosphate as a cofactor.

The catalysed reaction is (2S,6S)-2,6-diaminopimelate + 2-oxoglutarate = (S)-2,3,4,5-tetrahydrodipicolinate + L-glutamate + H2O + H(+). Its pathway is amino-acid biosynthesis; L-lysine biosynthesis via DAP pathway; LL-2,6-diaminopimelate from (S)-tetrahydrodipicolinate (aminotransferase route): step 1/1. Its function is as follows. Involved in the synthesis of meso-diaminopimelate (m-DAP or DL-DAP), required for both lysine and peptidoglycan biosynthesis. Catalyzes the direct conversion of tetrahydrodipicolinate to LL-diaminopimelate. The chain is LL-diaminopimelate aminotransferase from Prochlorococcus marinus (strain AS9601).